The following is a 1293-amino-acid chain: DNA-directed RNA polymerase subunit beta' (1293 aa).

Zn(2+) is bound by residues Cys60, Cys62, Cys75, and Cys78. Mg(2+)-binding residues include Asp535, Asp537, and Asp539. The Zn(2+) site is built by Cys873, Cys950, Cys957, and Cys960.

This sequence belongs to the RNA polymerase beta' chain family. As to quaternary structure, the RNAP catalytic core consists of 2 alpha, 1 beta, 1 beta' and 1 omega subunit. When a sigma factor is associated with the core the holoenzyme is formed, which can initiate transcription. The cofactor is Mg(2+). Requires Zn(2+) as cofactor.

The enzyme catalyses RNA(n) + a ribonucleoside 5'-triphosphate = RNA(n+1) + diphosphate. Functionally, DNA-dependent RNA polymerase catalyzes the transcription of DNA into RNA using the four ribonucleoside triphosphates as substrates. This chain is DNA-directed RNA polymerase subunit beta', found in Cutibacterium acnes (strain DSM 16379 / KPA171202) (Propionibacterium acnes).